A 187-amino-acid chain; its full sequence is Probable nicotinate-nucleotide adenylyltransferase (187 aa).

Belongs to the NadD family.

The catalysed reaction is nicotinate beta-D-ribonucleotide + ATP + H(+) = deamido-NAD(+) + diphosphate. It participates in cofactor biosynthesis; NAD(+) biosynthesis; deamido-NAD(+) from nicotinate D-ribonucleotide: step 1/1. In terms of biological role, catalyzes the reversible adenylation of nicotinate mononucleotide (NaMN) to nicotinic acid adenine dinucleotide (NaAD). The polypeptide is Probable nicotinate-nucleotide adenylyltransferase (Anaeromyxobacter dehalogenans (strain 2CP-1 / ATCC BAA-258)).